Consider the following 796-residue polypeptide: Inactive dipeptidyl peptidase 10 (796 aa).

The Cytoplasmic segment spans residues 1-34 (MNQTASVSHHIKCQPSKTIKELGSNSPPQRNWKG). The tract at residues 1–55 (MNQTASVSHHIKCQPSKTIKELGSNSPPQRNWKGIAIALLVILVVCSLITMSVIL) is mediates effects on KCND2. Residues 35–55 (IAIALLVILVVCSLITMSVIL) traverse the membrane as a helical; Signal-anchor for type II membrane protein segment. The Extracellular portion of the chain corresponds to 56–796 (LTPDELTNSS…VLPQEPEEDE (741 aa)). N-linked (GlcNAc...) asparagine glycans are attached at residues asparagine 63, asparagine 90, asparagine 111, and asparagine 119. A phosphotyrosine mark is found at tyrosine 138 and tyrosine 143. Asparagine 257, asparagine 342, and asparagine 748 each carry an N-linked (GlcNAc...) asparagine glycan.

Belongs to the peptidase S9B family. DPPIV subfamily. In terms of assembly, may form oligomers. Interacts with KCND1. Interacts with KCND2. Identified in a complex with KCND2 and KCNIP3. N-glycosylation is important for cell surface expression, specially at Asn-257, which is crucial. As to expression, detected in brain cortex, hippocampus, thalamus and cerebellum Purkinje cells (at protein level).

The protein localises to the cell membrane. Promotes cell surface expression of the potassium channel KCND2. Modulates the activity and gating characteristics of the potassium channel KCND2. Has no dipeptidyl aminopeptidase activity. This is Inactive dipeptidyl peptidase 10 (Dpp10) from Rattus norvegicus (Rat).